We begin with the raw amino-acid sequence, 184 residues long: uncharacterized protein (184 aa).

A disordered region spans residues 1-24 (MGISDQINSNLSSQSPFTVSTNPS).

This is an uncharacterized protein from Dictyostelium discoideum (Social amoeba).